The primary structure comprises 231 residues: Sugar fermentation stimulation protein homolog (231 aa).

It belongs to the SfsA family.

The sequence is that of Sugar fermentation stimulation protein homolog from Pyrobaculum islandicum (strain DSM 4184 / JCM 9189 / GEO3).